The primary structure comprises 121 residues: uncharacterized protein (121 aa).

This sequence to M.jannaschii MJ0989.

This is an uncharacterized protein from Methanopyrus kandleri (strain AV19 / DSM 6324 / JCM 9639 / NBRC 100938).